Reading from the N-terminus, the 222-residue chain is Iron-sulfur cluster repair protein YtfE (222 aa).

The protein belongs to the RIC family. YtfE subfamily. In terms of assembly, homodimer.

The protein resides in the cytoplasm. Its function is as follows. Di-iron-containing protein involved in the repair of iron-sulfur clusters damaged by oxidative and nitrosative stress conditions. This chain is Iron-sulfur cluster repair protein YtfE, found in Musicola paradisiaca (strain Ech703) (Dickeya paradisiaca).